A 414-amino-acid polypeptide reads, in one-letter code: MSLEMFDKEIFDLTNKELERQCEGLEMIASENFTLPEVMEVMGSILTNKYAEGYPGKRYYGGCEFVDEIETLAIERCKKLFNCKFANVQPNSGSQANQGVYAALINPGDKILGMDLSHGGHLTHGAKVSSSGKMYESCFYGVELDGRIDYEKVREIAKKEKPKLIVCGASAYARVIDFAKFREIADEVGAYLFADIAHIAGLVVAGEHPSPFPHAHVVSSTTHKTLRGPRGGIIMTNDEELAKKINSAIFPGIQGGPLMHVIAAKAVGFKFNLSDEWKVYAKQVRTNAQVLANVLMDRKFKLVSDGTDNHLVLMSFLDREFSGKDADLALGNAGITANKNTVPGEIRSPFITSGLRLGTPALTARGFKEKEMEIVSNYIADILDDVNNEKLQKNIKQELKKLASNFIIYERAMF.

Residues leucine 116 and 120–122 contribute to the (6S)-5,6,7,8-tetrahydrofolate site; that span reads GHL. Residue lysine 224 is modified to N6-(pyridoxal phosphate)lysine. Residues glutamate 240 and 348-350 each bind (6S)-5,6,7,8-tetrahydrofolate; that span reads SPF.

Belongs to the SHMT family. Homodimer. The cofactor is pyridoxal 5'-phosphate.

Its subcellular location is the cytoplasm. The catalysed reaction is (6R)-5,10-methylene-5,6,7,8-tetrahydrofolate + glycine + H2O = (6S)-5,6,7,8-tetrahydrofolate + L-serine. The protein operates within one-carbon metabolism; tetrahydrofolate interconversion. Its pathway is amino-acid biosynthesis; glycine biosynthesis; glycine from L-serine: step 1/1. Catalyzes the reversible interconversion of serine and glycine with tetrahydrofolate (THF) serving as the one-carbon carrier. This reaction serves as the major source of one-carbon groups required for the biosynthesis of purines, thymidylate, methionine, and other important biomolecules. Also exhibits THF-independent aldolase activity toward beta-hydroxyamino acids, producing glycine and aldehydes, via a retro-aldol mechanism. The sequence is that of Serine hydroxymethyltransferase from Campylobacter jejuni (strain RM1221).